A 527-amino-acid polypeptide reads, in one-letter code: Glucose transporter 1B/1C/1D/1F/2B (527 aa).

Residues 1–22 are disordered; it reads MTERRDNVSHAPDAIEGPNDGA. Topologically, residues 1-43 are cytoplasmic; it reads MTERRDNVSHAPDAIEGPNDGAHAEDTSPGFFSLENLGVAQVQ. The chain crosses the membrane as a helical span at residues 44 to 64; that stretch reads VVGGTLNGYVIGYVAVYLLLY. At 65–118 the chain is on the extracellular side; the sequence is LTATECKFTTEGACGGRKIYGCKWSGTTCKFENPKCSEGSDPSDSCKNEVAYTS. Residues 119 to 139 traverse the membrane as a helical segment; the sequence is VYSGIFACAMIVGSMVGSIIA. The Cytoplasmic segment spans residues 140-151; sequence GKCITTFGLKKS. Residues 152–172 form a helical membrane-spanning segment; that stretch reads FIIVSITCTIACVVVQVAIEY. Residues 173 to 175 are Extracellular-facing; the sequence is NNY. Residues 176 to 196 traverse the membrane as a helical segment; sequence YALCTGRVLIGLGVGILCSVF. The Cytoplasmic portion of the chain corresponds to 197 to 213; it reads PMYVNENAHPKLCKMDG. Residues 214-234 form a helical membrane-spanning segment; sequence VLFQVFTTLGIMLAAMLGLIL. Over 235 to 249 the chain is Extracellular; the sequence is DKTGASKEEANMAGR. The helical transmembrane segment at 250–270 threads the bilayer; that stretch reads LHVFSAVPLGLSVAMFLVGMF. Topologically, residues 271-299 are cytoplasmic; it reads LRESTATFAQDDDGKADGGMDPNEYGWGQ. Residues 300–320 traverse the membrane as a helical segment; the sequence is MLWPLFMGAVTAGTLQLTGIN. Residues 321 to 338 are Extracellular-facing; it reads AVMNYAPKITENLGMDPS. A helical membrane pass occupies residues 339-359; the sequence is LGNFLVMAWNFVTSLVAIPLA. Topologically, residues 360–372 are cytoplasmic; sequence SRFTMRQMFITCS. Residues 373–393 traverse the membrane as a helical segment; the sequence is FVASCMCLFLCGIPVFPGVAG. Residues 394–403 lie on the Extracellular side of the membrane; it reads KEVKNGVATT. The helical transmembrane segment at 404–424 threads the bilayer; it reads GIALFIAAFEFGVGSCFFVLA. Topologically, residues 425–436 are cytoplasmic; it reads QDLFPPSFRPKG. A helical membrane pass occupies residues 437 to 457; the sequence is GSFVVMMQFIFNILINLLYPI. The Extracellular segment spans residues 458 to 475; it reads TTEAISGGATGNQDKGQA. Residues 476 to 496 form a helical membrane-spanning segment; the sequence is VAFILFGLIGLICSVLQFFYL. Residues 497–527 are Cytoplasmic-facing; the sequence is YPYDANQDHENDHGGEPVEQKTYPVEASPRN. Positions 506–515 are enriched in basic and acidic residues; that stretch reads ENDHGGEPVE. Residues 506-527 form a disordered region; that stretch reads ENDHGGEPVEQKTYPVEASPRN.

Belongs to the major facilitator superfamily. Sugar transporter (TC 2.A.1.1) family.

The protein resides in the membrane. Its function is as follows. Facilitative glucose transporter. The protein is Glucose transporter 1B/1C/1D/1F/2B (THT1B) of Trypanosoma brucei brucei.